Here is a 442-residue protein sequence, read N- to C-terminus: Xaa-Pro dipeptidase (442 aa).

5 residues coordinate Mn(2+): D245, D256, H338, E383, and E422.

Belongs to the peptidase M24B family. Bacterial-type prolidase subfamily. It depends on Mn(2+) as a cofactor.

It carries out the reaction Xaa-L-Pro dipeptide + H2O = an L-alpha-amino acid + L-proline. In terms of biological role, splits dipeptides with a prolyl residue in the C-terminal position. The chain is Xaa-Pro dipeptidase from Sodalis glossinidius (strain morsitans).